Reading from the N-terminus, the 399-residue chain is Nicotinate phosphoribosyltransferase (399 aa).

The residue at position 217 (His-217) is a Phosphohistidine; by autocatalysis.

This sequence belongs to the NAPRTase family. In terms of processing, transiently phosphorylated on a His residue during the reaction cycle. Phosphorylation strongly increases the affinity for substrates and increases the rate of nicotinate D-ribonucleotide production. Dephosphorylation regenerates the low-affinity form of the enzyme, leading to product release.

It carries out the reaction nicotinate + 5-phospho-alpha-D-ribose 1-diphosphate + ATP + H2O = nicotinate beta-D-ribonucleotide + ADP + phosphate + diphosphate. It functions in the pathway cofactor biosynthesis; NAD(+) biosynthesis; nicotinate D-ribonucleotide from nicotinate: step 1/1. Catalyzes the synthesis of beta-nicotinate D-ribonucleotide from nicotinate and 5-phospho-D-ribose 1-phosphate at the expense of ATP. This Burkholderia ambifaria (strain MC40-6) protein is Nicotinate phosphoribosyltransferase.